Consider the following 342-residue polypeptide: Pyridoxal 4-dehydrogenase (342 aa).

The active site involves Asp-56. The active-site Proton donor is Tyr-61. Lys-86 is an active-site residue. An NADP(+)-binding site is contributed by 245–255; sequence GVFNSGILAAP.

It belongs to the aldo/keto reductase family. Homodimer.

It carries out the reaction pyridoxal + NAD(+) = 4-pyridoxolactone + NADH + H(+). It participates in cofactor degradation; B6 vitamer degradation; 4-pyridoxate from pyridoxal: step 1/2. The chain is Pyridoxal 4-dehydrogenase (pld1) from Microbacterium luteolum (Aureobacterium luteolum).